A 429-amino-acid polypeptide reads, in one-letter code: MPATILIGAQWGDEGKGKATDLLAKDIDYVVKFNGGNNAGHTVVIGGDKYVLHLLPSGILNENVVPVIANGVVINPEVLFDEIATLNSRGVNTDKLVISANAHIIAPFHRTIDLVTERFLGKRQLGTTGRGIGPTYADKINRIGIRVQDLFDKSVLRQKIEGSLSNKNHMLVKVFNRRSVSVTEMLDYLLSFAERMRPMIADTSLLLNNALDCGKHVLFEGGQATMLDVDHGSYPFVTSSNATVGGAITGAGIGPTRVNKVIGVAKSYTTRVGAGPFPTELHDEYGEWLQKRGYEVGATTGRKRRCGWFDGVVARYATRINGITDYVLTKLDVLTGLDRIPICVGYKVGDSVFREMPVSQSDFHHAVPIYEDLPGWQCNISECESFDSLPPEARGYVLALEDLIKARISVIGTGPERENIIIRHPLGIF.

GTP is bound by residues 12 to 18 (GDEGKGK) and 40 to 42 (GHT). Asp13 acts as the Proton acceptor in catalysis. Asp13 and Gly40 together coordinate Mg(2+). Residues 13-16 (DEGK), 38-41 (NAGH), Thr128, Arg142, Gln223, Thr238, and Arg302 contribute to the IMP site. His41 acts as the Proton donor in catalysis. 298-304 (ATTGRKR) provides a ligand contact to substrate. Residues Arg304, 330 to 332 (KLD), and 412 to 414 (GTG) each bind GTP.

It belongs to the adenylosuccinate synthetase family. Homodimer. The cofactor is Mg(2+).

The protein resides in the cytoplasm. The catalysed reaction is IMP + L-aspartate + GTP = N(6)-(1,2-dicarboxyethyl)-AMP + GDP + phosphate + 2 H(+). It functions in the pathway purine metabolism; AMP biosynthesis via de novo pathway; AMP from IMP: step 1/2. In terms of biological role, plays an important role in the de novo pathway of purine nucleotide biosynthesis. Catalyzes the first committed step in the biosynthesis of AMP from IMP. The chain is Adenylosuccinate synthetase from Tropheryma whipplei (strain TW08/27) (Whipple's bacillus).